Reading from the N-terminus, the 79-residue chain is Protein AC4 (79 aa).

Polar residues-rich tracts occupy residues methionine 1 to glutamine 13 and glutamine 38 to histidine 79. Residues methionine 1–histidine 79 form a disordered region.

Belongs to the geminiviridae protein AC4/C4 family.

Its function is as follows. Pathogenicity determinant. May act as a suppressor of RNA-mediated gene silencing, also known as post-transcriptional gene silencing (PTGS), a mechanism of plant viral defense that limits the accumulation of viral RNAs. In Bean golden yellow mosaic virus (isolate Puerto Rico-Japan) (BGYMV), this protein is Protein AC4.